Consider the following 475-residue polypeptide: Protein transport protein Sec61 subunit alpha (475 aa).

The next 10 helical transmembrane spans lie at 33 to 53 (LWTA…LFGI), 76 to 96 (LMEL…LLAG), 118 to 138 (LFGM…GMYG), 145 to 165 (AGIC…VLLL), 173 to 193 (YGLG…TIVW), 241 to 261 (NLMN…FQGF), 289 to 309 (IPII…QMLA), 354 to 374 (FLDP…CAFF), 420 to 440 (AAFG…IGAI), and 441 to 461 (GSGT…EIFV).

Belongs to the SecY/SEC61-alpha family. As to quaternary structure, the SEC61 channel-forming translocon complex consists of channel-forming core components SEC61A1, SEC61B and SEC61G and different auxiliary components such as SEC62 and SEC63. The SEC61 channel associates with the multi-pass translocon (MPT) complex. As to expression, expressed predominantly in epidermal cells of the embryo.

The protein localises to the endoplasmic reticulum membrane. Functionally, component of SEC61 channel-forming translocon complex that mediates transport of signal peptide-containing precursor polypeptides across the endoplasmic reticulum (ER). Forms a ribosome receptor and a gated pore in the ER membrane, both functions required for cotranslational translocation of nascent polypeptides. May cooperate with auxiliary protein SEC62, SEC63 and HSPA5/BiP to enable post-translational transport of small presecretory proteins. The SEC61 channel is also involved in ER membrane insertion of transmembrane proteins: it mediates membrane insertion of the first few transmembrane segments of proteins, while insertion of subsequent transmembrane regions of multi-pass membrane proteins is mediated by the multi-pass translocon (MPT) complex. The polypeptide is Protein transport protein Sec61 subunit alpha (Halocynthia roretzi (Sea squirt)).